A 423-amino-acid polypeptide reads, in one-letter code: AP-1 complex subunit mu-2 (423 aa).

The MHD domain maps to 168–421 (KNEVFIDVIE…ITQSGDYQLR (254 aa)).

This sequence belongs to the adaptor complexes medium subunit family. In terms of assembly, adaptor protein complex 1 (AP-1) is a heterotetramer composed of two large adaptins (gamma-type subunit AP1G1 and beta-type subunit AP1B1), a medium adaptin (mu-type subunit AP1M1 or AP1M2) and a small adaptin (sigma-type subunit AP1S1 or AP1S2 or AP1S3). Interacts with P2X4. In terms of processing, phosphorylation of membrane-bound AP1M1/AP1M2 increases its affinity for sorting signals.

It is found in the cytoplasmic vesicle. Its subcellular location is the clathrin-coated vesicle membrane. The protein localises to the golgi apparatus. Subunit of clathrin-associated adaptor protein complex 1 that plays a role in protein sorting in the trans-Golgi network (TGN) and endosomes. The AP complexes mediate the recruitment of clathrin to membranes and the recognition of sorting signals within the cytosolic tails of transmembrane cargo molecules. The sequence is that of AP-1 complex subunit mu-2 from Bos taurus (Bovine).